The chain runs to 280 residues: Small ribosomal subunit protein uS2 (280 aa).

The protein belongs to the universal ribosomal protein uS2 family.

The polypeptide is Small ribosomal subunit protein uS2 (Desulforapulum autotrophicum (strain ATCC 43914 / DSM 3382 / VKM B-1955 / HRM2) (Desulfobacterium autotrophicum)).